The primary structure comprises 217 residues: High frequency lysogenization protein HflD homolog (217 aa).

It belongs to the HflD family.

The protein resides in the cytoplasm. It localises to the cell membrane. The sequence is that of High frequency lysogenization protein HflD homolog from Buchnera aphidicola subsp. Baizongia pistaciae (strain Bp).